We begin with the raw amino-acid sequence, 394 residues long: Phosphoglycerate kinase (394 aa).

Residues 21–23, R36, 59–62, R118, and R151 contribute to the substrate site; these read DFN and HLGR. The residue at position 183 (S183) is a Phosphoserine. K201 provides a ligand contact to ATP. Position 299 is a phosphothreonine (T299). Residues E323 and 350-353 contribute to the ATP site; that span reads GGDS.

The protein belongs to the phosphoglycerate kinase family. In terms of assembly, monomer.

The protein resides in the cytoplasm. It catalyses the reaction (2R)-3-phosphoglycerate + ATP = (2R)-3-phospho-glyceroyl phosphate + ADP. Its pathway is carbohydrate degradation; glycolysis; pyruvate from D-glyceraldehyde 3-phosphate: step 2/5. This chain is Phosphoglycerate kinase, found in Geobacillus kaustophilus (strain HTA426).